A 474-amino-acid polypeptide reads, in one-letter code: Coronin-1C (474 aa).

WD repeat units follow at residues 25–70 (DDIR…GRID), 78–118 (GHTG…LTLS), 128–168 (GHSK…ALIN), 172–202 (MHSD…RVID), 215–249 (AHEG…ALWN), and 263–303 (DTSN…PYVH). The stretch at 436-474 (QNEAKLDEILKEIKSIKDTICNQDERISKLEQQMAKIAA) forms a coiled coil. K446 carries the N6-acetyllysine modification.

The protein belongs to the WD repeat coronin family. In terms of assembly, binds F-actin. Interacts with RCC2. Interacts preferentially with nucleotide-free and GDP-bound RAC1. Interacts with VIM (via head domain). Isoform 1 and isoform 2 appear as homotrimers, while isoform 3 seems to exist as monomers. Interacts with MICAL2; this interaction recruits MICAL2 to the actin filaments. In terms of tissue distribution, ubiquitous.

The protein localises to the cell membrane. The protein resides in the cell projection. It localises to the lamellipodium. Its subcellular location is the ruffle membrane. It is found in the cytoplasm. The protein localises to the cytoskeleton. The protein resides in the cell cortex. It localises to the endosome membrane. Its subcellular location is the sarcolemma. It is found in the myofibril. The protein localises to the sarcomere. The protein resides in the synapse. In terms of biological role, plays a role in directed cell migration by regulating the activation and subcellular location of RAC1. Increases the presence of activated RAC1 at the leading edge of migrating cells. Required for normal organization of the cytoskeleton, including the actin cytoskeleton, microtubules and the vimentin intermediate filaments. Plays a role in endoplasmic reticulum-associated endosome fission: localizes to endosome membrane tubules and promotes recruitment of TMCC1, leading to recruitment of the endoplasmic reticulum to endosome tubules for fission. Endosome membrane fission of early and late endosomes is essential to separate regions destined for lysosomal degradation from carriers to be recycled to the plasma membrane. Required for normal cell proliferation, cell migration, and normal formation of lamellipodia. Required for normal distribution of mitochondria within cells. Functionally, involved in myogenic differentiation. In Homo sapiens (Human), this protein is Coronin-1C.